Here is a 57-residue protein sequence, read N- to C-terminus: UPF0391 membrane protein Atu4467 (57 aa).

Transmembrane regions (helical) follow at residues 4–24 and 33–53; these read WALI…TGIS and ILFF…LMAG.

Belongs to the UPF0391 family.

The protein resides in the cell membrane. In Agrobacterium fabrum (strain C58 / ATCC 33970) (Agrobacterium tumefaciens (strain C58)), this protein is UPF0391 membrane protein Atu4467.